We begin with the raw amino-acid sequence, 428 residues long: MPIIEQVGAREILDSRGNPTVEVEVALIDGTFARAAVPSGASTGEHEAVELRDGGDRYGGKGVKKAVEAVLDEIGPAVIGLNADDQRLVDQALVDLDGTPDKSRLGGNSILGVSLAVAKAASESAELPLFRYIGGPNAHILPVPMMNILNGGAHADTGVDIQEFMVAPIGAPSFSEALRWGAEVYHALKAVLKKAGLSTGLGDEGGFAPDVASTTAALDLISQAIEAAGFKPGVDVALALDAAANEFHADGSYTFEGTPRTAAQMTEFYAGLLGSYPVVSIEDPLYENDWDGWAALTAEIGDRVQIVGDDVFVTNPERLEEGIDRGVANALLVKVNQIGTLTETLDAVALAHHSGYRTMISHRSGETEDTIIADLAVAVGSGQIKTGAPARSERVAKYNQLLRIEEALGDAARYAGDLAFPRFVADPK.

(2R)-2-phosphoglycerate is bound at residue Gln162. Glu204 acts as the Proton donor in catalysis. 3 residues coordinate Mg(2+): Asp241, Glu282, and Asp309. (2R)-2-phosphoglycerate contacts are provided by Lys334, Arg363, Ser364, and Lys385. Catalysis depends on Lys334, which acts as the Proton acceptor.

It belongs to the enolase family. Requires Mg(2+) as cofactor.

The protein resides in the cytoplasm. It localises to the secreted. Its subcellular location is the cell surface. It catalyses the reaction (2R)-2-phosphoglycerate = phosphoenolpyruvate + H2O. Its pathway is carbohydrate degradation; glycolysis; pyruvate from D-glyceraldehyde 3-phosphate: step 4/5. In terms of biological role, catalyzes the reversible conversion of 2-phosphoglycerate (2-PG) into phosphoenolpyruvate (PEP). It is essential for the degradation of carbohydrates via glycolysis. This chain is Enolase, found in Mycobacterium ulcerans (strain Agy99).